We begin with the raw amino-acid sequence, 68 residues long: Large ribosomal subunit protein uL29 (68 aa).

Belongs to the universal ribosomal protein uL29 family.

The protein is Large ribosomal subunit protein uL29 of Acidiphilium cryptum (strain JF-5).